Here is a 1274-residue protein sequence, read N- to C-terminus: MKRRLDDQESPVYAAQQRRIPGSTEAFSHQHRVLAPAPPVYEAVSETMQSATGIQYSVAPNYQVSAVPQSSGSHGPAIAAVHSSHHHPTAVQPHGGQVVQSHAHPAPPVAPVQGQQQFQRLKVEDALSYLDQVKLQFGSQPQVYNDFLDIMKEFKSQSIDTPGVISRVSQLFKGHPDLIMGFNTFLPPGYKIEVQTNDMVNVTTPGQVHQIPTHGIQPQPQPPPQHPSQPSSQSAPTPAQPAPQPTAAKVSKPSQLQAHTPASQQTPPLPPYASPRSPPVQPHTPVTISLGTAPSLQNNQPVEFNHAINYVNKIKNRFQGQPDIYKAFLEILHTYQKEQRNAKEAGGNYTPALTEQEVYAQVARLFKNQEDLLSEFGQFLPDANSSVLLSKTTAEKVDSVRNDHGGTVKKPQLNNKPQRPSQNGCQIRRHSGTGATPPVKKKPKLMSLKESSMADASKHGVGTESLFFDKVRKALRSAEAYENFLRCLVIFNQEVISRAELVQLVSPFLGKFPELFNWFKNFLGYKESVHLESFPKERATEGIAMEIDYASCKRLGSSYRALPKSYQQPKCTGRTPLCKEVLNDTWVSFPSWSEDSTFVSSKKTQYEEHIYRCEDERFELDVVLETNLATIRVLEAIQKKLSRLSAEEQAKFRLDNTLGGTSEVIHRKALQRIYADKAADIIDGLRKNPSIAVPIVLKRLKMKEEEWREAQRGFNKVWREQNEKYYLKSLDHQGINFKQNDTKVLRSKSLLNEIESIYDERQEQATEENAGVPVGPHLSLAYEDKQILEDAAALIIHHVKRQTGIQKEDKYKIKQIMHHFIPDLLFAQRGDLSDVEEEEEEEMDVDEATGAPKKHNGVGGSPPKSKLLFSNTAAQKLRGMDEVYNLFYVNNNWYIFMRLHQILCLRLLRICSQAERQIEEENREREWEREVLGIKRDKSDSPAIQLRLKEPMDVDVEDYYPAFLDMVRSLLDGNIDSSQYEDSLREMFTIHAYIAFTMDKLIQSIVRQLQHIVSDEVCVQVTDLYLAENNNGATGGQLNSQTSRSLLESAYQRKAEQLMSDENCFKLMFIQSQGQVQLTVELLDTEEENSDDPVEAERWSDYVERYMSSDTTSPELREHLAQKPVFLPRNLRRIRKCQRGREQQEKEGKEGNSKKTMENVESLDKLECRFKLNSYKMVYVIKSEDYMYRRTALLRAHQSHERVSKRLHQRFQAWVDKWTKEHVPREMAAETSKWLMGEGLEGLVPCTTTCDTETLHFVSINKYRVKYGTVFKAP.

Disordered regions lie at residues 1–26 and 85–110; these read MKRRLDDQESPVYAAQQRRIPGSTEA and HHHPTAVQPHGGQVVQSHAHPAPPVA. At S10 the chain carries Phosphoserine. The PAH 1 domain occupies 119-189; sequence QRLKVEDALS…MGFNTFLPPG (71 aa). Residues 119–196 are interaction with HCFC1; the sequence is QRLKVEDALS…PPGYKIEVQT (78 aa). Glycyl lysine isopeptide (Lys-Gly) (interchain with G-Cter in SUMO2) cross-links involve residues K122 and K134. The tract at residues 205 to 297 is disordered; it reads PGQVHQIPTH…ISLGTAPSLQ (93 aa). The tract at residues 205-479 is interaction with REST; that stretch reads PGQVHQIPTH…KVRKALRSAE (275 aa). Residues 228-237 are compositionally biased toward low complexity; sequence SQPSSQSAPT. Polar residues predominate over residues 252–266; that stretch reads KPSQLQAHTPASQQT. The segment covering 267 to 282 has biased composition (pro residues); it reads PPLPPYASPRSPPVQP. S277 is modified (phosphoserine). T284 carries the phosphothreonine modification. Residues 284–297 are compositionally biased toward polar residues; that stretch reads TPVTISLGTAPSLQ. The 84-residue stretch at 300–383 folds into the PAH 2 domain; sequence QPVEFNHAIN…SEFGQFLPDA (84 aa). A disordered region spans residues 398 to 443; that stretch reads DSVRNDHGGTVKKPQLNNKPQRPSQNGCQIRRHSGTGATPPVKKKP. The span at 412-425 shows a compositional bias: polar residues; it reads QLNNKPQRPSQNGC. The region spanning 457–526 is the PAH 3 domain; sequence SKHGVGTESL…NWFKNFLGYK (70 aa). The tract at residues 459-526 is interaction with SAP30; it reads HGVGTESLFF…NWFKNFLGYK (68 aa). K470 carries the N6-acetyllysine modification. The interaction with NCOR1 stretch occupies residues 524–851; sequence GYKESVHLES…EMDVDEATGA (328 aa). The segment at 525–660 is interactions with SUDS3 and SAP130; it reads YKESVHLESF…KFRLDNTLGG (136 aa). Residue K564 forms a Glycyl lysine isopeptide (Lys-Gly) (interchain with G-Cter in SUMO2) linkage. Residues 688 to 830 are interactions with HDAC1 and ARID4B; the sequence is NPSIAVPIVL…IPDLLFAQRG (143 aa). Position 833 is a phosphoserine (S833). Residues 835-847 show a composition bias toward acidic residues; the sequence is VEEEEEEEMDVDE. The disordered stretch occupies residues 835–865; the sequence is VEEEEEEEMDVDEATGAPKKHNGVGGSPPKS. A Phosphoserine modification is found at S861. Residues K866 and K876 each carry the N6-acetyllysine modification. An interaction with OGT region spans residues 889–968; that stretch reads VNNNWYIFMR…YYPAFLDMVR (80 aa). The stretch at 904 to 933 forms a coiled coil; sequence CLRLLRICSQAERQIEEENREREWEREVLG. Phosphoserine occurs at positions 941, 1090, and 1113. The segment at 1137-1157 is disordered; the sequence is CQRGREQQEKEGKEGNSKKTM. Over residues 1139 to 1157 the composition is skewed to basic and acidic residues; that stretch reads RGREQQEKEGKEGNSKKTM.

In terms of assembly, interacts with ARID4B, BRMS1L, HCFC1, HDAC1, HDAC2, MXI1, SAP30L, SAP130, SFPQ and TOPORS. Interacts with OGT (via TPRs 1-6); the interaction mediates transcriptional repression in parallel with histone deacetylase. Interacts with BAZ2A, MXD1, MXD3, MXD4, MBD2, DACH1, NCOR1, NR4A2, REST, RLIM, SAP30, SETDB1, SMYD2, and SUDS3. Interacts with PHF12 in a complex composed of HDAC1, PHF12 and SAP30. Interacts with TET1; the interaction recruits SIN3A to gene promoters. The large PER complex involved in the histone deacetylation is composed of at least HDAC1, PER2, SFPQ and SIN3A. Interacts with KLF11. Interacts with PPHLN1. Found in a complex with YY1, GON4L and HDAC1. Interacts (via PAH2) with FOXK1. Interacts with FOXK2. Found in a complex composed of at least SINHCAF, SIN3A, HDAC1, SAP30, RBBP4, OGT and TET1. Interacts with SINHCAF. Interacts with SPHK2. SUMO1 sumoylated by TOPORS. Probably desumoylated by SENP2. In terms of tissue distribution, widely expressed. Highest levels in testis, lung and thymus. Expressed at relatively high levels throughout brain development. In adult mice, expression is high in neurogenic regions such as the subventricular zone, rostral migratory stream, olfactory bulb and dentate gyrus.

Its subcellular location is the nucleus. The protein resides in the nucleolus. In terms of biological role, acts as a transcriptional repressor. Corepressor for REST. Interacts with MXI1 to repress MYC responsive genes and antagonize MYC oncogenic activities. Also interacts with MXD1-MAX heterodimers to repress transcription by tethering SIN3A to DNA. Acts cooperatively with OGT to repress transcription in parallel with histone deacetylation. Involved in the control of the circadian rhythms. Required for the transcriptional repression of circadian target genes, such as PER1, mediated by the large PER complex through histone deacetylation. Cooperates with FOXK1 to regulate cell cycle progression probably by repressing cell cycle inhibitor genes expression. Required for cortical neuron differentiation and callosal axon elongation. The chain is Paired amphipathic helix protein Sin3a (Sin3a) from Mus musculus (Mouse).